Here is a 1026-residue protein sequence, read N- to C-terminus: Exportin-T (1026 aa).

The protein belongs to the exportin family.

The protein resides in the nucleus. The protein localises to the cytoplasm. Its function is as follows. tRNA nucleus export receptor which facilitates tRNA translocation across the nuclear pore complex. Involved in pre-tRNA splicing, probably by affecting the interaction of pre-tRNA with splicing endonuclease. The sequence is that of Exportin-T (los1) from Neurospora crassa (strain ATCC 24698 / 74-OR23-1A / CBS 708.71 / DSM 1257 / FGSC 987).